A 152-amino-acid chain; its full sequence is UPF0266 membrane protein Ent638_2389 (152 aa).

3 helical membrane-spanning segments follow: residues 6-26 (IVLVLFIVALLAYAFYDEFIM), 45-65 (VDAFIFAGLLAILIYNNVMSQ), and 67-87 (ALLTTWLLCVLALMAFYLFWI).

It belongs to the UPF0266 family.

Its subcellular location is the cell inner membrane. This is UPF0266 membrane protein Ent638_2389 from Enterobacter sp. (strain 638).